The primary structure comprises 445 residues: Glucose-6-phosphate isomerase (445 aa).

The Proton donor role is filled by Glu287. Active-site residues include His308 and Lys422.

The protein belongs to the GPI family.

The protein resides in the cytoplasm. It catalyses the reaction alpha-D-glucose 6-phosphate = beta-D-fructose 6-phosphate. Its pathway is carbohydrate biosynthesis; gluconeogenesis. The protein operates within carbohydrate degradation; glycolysis; D-glyceraldehyde 3-phosphate and glycerone phosphate from D-glucose: step 2/4. Functionally, catalyzes the reversible isomerization of glucose-6-phosphate to fructose-6-phosphate. This Bacteroides thetaiotaomicron (strain ATCC 29148 / DSM 2079 / JCM 5827 / CCUG 10774 / NCTC 10582 / VPI-5482 / E50) protein is Glucose-6-phosphate isomerase.